Consider the following 883-residue polypeptide: Brevican core protein (883 aa).

The signal sequence occupies residues 1 to 22; sequence MIPLLLSLLAALVLTQAPAALA. Positions 35 to 154 constitute an Ig-like V-type domain; the sequence is FRVRIGAAQL…SSDAVEVKVK (120 aa). Disulfide bonds link cysteine 56–cysteine 136, cysteine 178–cysteine 249, cysteine 202–cysteine 223, cysteine 276–cysteine 351, and cysteine 300–cysteine 321. Residue asparagine 129 is glycosylated (N-linked (GlcNAc...) asparagine). Link domains are found at residues 156-251 and 256-353; these read VVFL…YCYA and GELF…YCFR. Asparagine 336 carries N-linked (GlcNAc...) asparagine glycosylation. Residues 389–574 form a disordered region; that stretch reads QEAVESESRG…EDGPSLLPET (186 aa). The residue at position 413 (serine 413) is a Phosphoserine. The O-linked (Xyl...) (chondroitin sulfate) serine glycan is linked to serine 413. Positions 428-440 are enriched in polar residues; the sequence is ESETQSVAPPTGS. Residues 441-451 are compositionally biased toward acidic residues; it reads SEEEGEALEEE. Positions 452 to 467 are enriched in basic and acidic residues; the sequence is ERFKDTETPKEEKEQE. The GPI-anchor amidated serine moiety is linked to residue serine 622. The EGF-like domain maps to 622 to 658; the sequence is SSGDCIPSPCHNGGTCLEEKEGFRCLCVPGYGGDLCD. Disulfide bonds link cysteine 626/cysteine 637, cysteine 631/cysteine 646, cysteine 648/cysteine 657, cysteine 692/cysteine 784, cysteine 760/cysteine 776, cysteine 791/cysteine 834, and cysteine 820/cysteine 847. The region spanning 658-786 is the C-type lectin domain; the sequence is DVGLHFCSPG…NYHLSYTCKM (129 aa). The Sushi domain maps to 789–849; it reads VSCGPPPQLP…WEAPQISCVP (61 aa). The disordered stretch occupies residues 859 to 883; the sequence is MTAPEGPRGQLPRQRKALLTPPSSL.

Belongs to the aggrecan/versican proteoglycan family. As to quaternary structure, interacts with TNR. In terms of processing, O-glycosylated; contains chondroitin sulfate. In terms of tissue distribution, brain.

It is found in the secreted. Its subcellular location is the extracellular space. The protein resides in the extracellular matrix. The protein localises to the membrane. Its function is as follows. May play a role in the terminally differentiating and the adult nervous system during postnatal development. Could stabilize interactions between hyaluronan (HA) and brain proteoglycans. Isoform 2 may function as a chondroitin sulfate-bearing cell surface receptor. The sequence is that of Brevican core protein (Bcan) from Rattus norvegicus (Rat).